Consider the following 410-residue polypeptide: MVLSQRQRDELNRAIADYLRSNGYEEAYSTFKKEAELDNNEELDKKYAGLLEKKWTSVIRLQKKVMELESKLNEAKEEITLGGPVSQKRDPKEWIPRPPERYALSGHRSPVTRVIFHPVFSVMVSASEDATIKVWDYETGDFERTLKGHTDSVQDISFDLTGKLLASCSADMTIKLWDFQSFECIRTMHGHDHNVSSVAIMPNGDHIISASRDKTMKMWEVATGYCVKTFTGHREWVRMVRPNQDGTLIASCSNDQTVRVWVVASKECKAELREHEHVVECISWAPESAHPTILDATSSESKKSGKPGPFLLSGSRDKTIKMWDVSTGMCLMTLVGHDNWVRGVLFHPGGKFIVTCADDKTLRIWDYKNKRCMKTLCAHEHFVTSLDFHKAAPYVVTGSVDQTVKVWECR.

Residues 7-39 (QRDELNRAIADYLRSNGYEEAYSTFKKEAELDN) form the LisH domain. Residues 32 to 82 (KKEAELDNNEELDKKYAGLLEKKWTSVIRLQKKVMELESKLNEAKEEITLG) adopt a coiled-coil conformation. 7 WD repeats span residues 106–147 (GHRS…RTLK), 148–189 (GHTD…RTMH), 190–229 (GHDH…CVKT), 232–271 (GHRE…CKAE), 274–333 (EHEH…CLMT), 336–375 (GHDN…CMKT), and 378–410 (AHEH…WECR).

This sequence belongs to the WD repeat LIS1/nudF family. Can self-associate. Component of the cytosolic PAF-AH (I) heterotetrameric enzyme, which is composed of PAFAH1B1 (beta), PAFAH1B2 (alpha2) and PAFAH1B3 (alpha1) subunits. The catalytic activity of the enzyme resides in the alpha1 (PAFAH1B3) and alpha2 (PAFAH1B2) subunits, whereas the beta subunit (PAFAH1B1) has regulatory activity. Trimer formation is not essential for the catalytic activity. Interacts with dynein, dynactin, nde1 and ndel1.

It localises to the cytoplasm. Its subcellular location is the cytoskeleton. It is found in the microtubule organizing center. The protein resides in the centrosome. Functionally, regulatory subunit (beta subunit) of the cytosolic type I platelet-activating factor (PAF) acetylhydrolase (PAF-AH (I)), an enzyme that catalyzes the hydrolyze of the acetyl group at the sn-2 position of PAF and its analogs and participates in the PAF inactivation. Positively regulates the activity of the minus-end directed microtubule motor protein dynein. May enhance dynein-mediated microtubule sliding by targeting dynein to the microtubule plus end. Required for several dynein- and microtubule-dependent processes such as the maintenance of Golgi integrity, the peripheral transport of microtubule fragments and the coupling of the nucleus and centrosome. May be required for proliferation of neuronal precursors and neuronal migration. The polypeptide is Lissencephaly-1 homolog (pafah1b1) (Tetraodon nigroviridis (Spotted green pufferfish)).